The sequence spans 218 residues: Calcineurin B-like protein 5 (218 aa).

EF-hand domains are found at residues 35-69 (EVEA…FRNK), 70-105 (KTNL…FHPD), 107-142 (PEEQ…LLDE), and 151-186 (AVEM…NPYV).

It belongs to the calcineurin regulatory subunit family. In terms of assembly, homodimer. As to expression, expressed at low levels in roots, shoots, culms, leaves and young spikelets.

Its function is as follows. Acts as a calcium sensor. CBL proteins interact with CIPK serine-threonine protein kinases. Binding of a CBL protein to the regulatory NAF domain of a CIPK protein lead to the activation of the kinase in a calcium-dependent manner. This is Calcineurin B-like protein 5 (CBL5) from Oryza sativa subsp. japonica (Rice).